The following is a 104-amino-acid chain: Large ribosomal subunit protein uL24 (104 aa).

It belongs to the universal ribosomal protein uL24 family. As to quaternary structure, part of the 50S ribosomal subunit.

One of two assembly initiator proteins, it binds directly to the 5'-end of the 23S rRNA, where it nucleates assembly of the 50S subunit. In terms of biological role, one of the proteins that surrounds the polypeptide exit tunnel on the outside of the subunit. The chain is Large ribosomal subunit protein uL24 from Sodalis glossinidius (strain morsitans).